The chain runs to 304 residues: Phosphatidylinositol mannoside acyltransferase (304 aa).

His-126 acts as the Proton acceptor in catalysis. Residues His-126 and Arg-164 each contribute to the hexadecanoyl-CoA site. Glu-200 is a catalytic residue. Residues Ser-206 and Glu-229 each contribute to the hexadecanoyl-CoA site.

Belongs to the LpxL/LpxM/LpxP family. As to quaternary structure, monomer.

The protein resides in the cell inner membrane. The enzyme catalyses a 2,6-O-bis(alpha-D-mannopyranosyl)-1-phosphatidyl-1D-myo-inositol + an acyl-CoA = a 2-O-(alpha-D-mannosyl)-6-O-(6-O-acyl-alpha-D-mannosyl)-1-phosphatidyl-1D-myo-inositol + CoA. The catalysed reaction is a 1,2-diacyl-sn-glycero-3-phospho-[alpha-D-mannopyranosyl-(1&lt;-&gt;6)-D-myo-inositol] + an acyl-CoA = a 1,2-diacyl-sn-glycero-3-phospho-[alpha-D-6-acyl-mannopyranosyl-(1&lt;-&gt;6)-D-myo-inositol] + CoA. The protein operates within phospholipid metabolism; phosphatidylinositol metabolism. In terms of biological role, catalyzes the transfer of a palmitoyl moiety from palmitoyl-CoA to the 6-position of the mannose ring linked to the 2-position of myo-inositol in phosphatidyl-myo-inositol monomannoside (PIM1) or dimannoside (PIM2). The sequence is that of Phosphatidylinositol mannoside acyltransferase from Mycolicibacterium smegmatis (strain ATCC 700084 / mc(2)155) (Mycobacterium smegmatis).